Here is a 69-residue protein sequence, read N- to C-terminus: MKTQFAVLIISMILMQMLVQTEAGFWGKLWEGVKSAIGKRSLRNQDQFDNMFDSDLSDADLKLLDDLFD.

The first 23 residues, M1 to A23, serve as a signal peptide directing secretion. Residue I37 is modified to Isoleucine amide. Positions S41–D69 are excised as a propeptide.

This sequence belongs to the non-disulfide-bridged peptide (NDBP) superfamily. Short antimicrobial peptide (group 4) family. In terms of tissue distribution, expressed by the venom gland.

The protein localises to the secreted. Its subcellular location is the target cell membrane. In terms of biological role, antimicrobial peptide that is rapidly bactericidal against Gram-positive bacteria. The polypeptide is Amphipathic peptide StCT2 (Scorpiops tibetanus (Scorpion)).